A 260-amino-acid polypeptide reads, in one-letter code: MSSTLQAILDDTRRDLAARKSAARTKEFEKRAAEHTPRGFRTALWERAQAGVAVIAELKKASPSKGLIRANFDVIALAKELEEAGAAALSVLTDVPHFQGSLENLERASQTVRIPCLRKDFILDPAQIVEARAYGADAILLIVAALTDLDLRNLRDEAKRYGLDVLCEVHDRDELKRAADLGFDLIGVNNRNLKTFRVDIENSLRFAEEFPPNALRVAESGIHSREDIDRLRDAAYSAFLIGESLMRADSPSATLRELIG.

It belongs to the TrpC family.

The catalysed reaction is 1-(2-carboxyphenylamino)-1-deoxy-D-ribulose 5-phosphate + H(+) = (1S,2R)-1-C-(indol-3-yl)glycerol 3-phosphate + CO2 + H2O. Its pathway is amino-acid biosynthesis; L-tryptophan biosynthesis; L-tryptophan from chorismate: step 4/5. The protein is Indole-3-glycerol phosphate synthase of Koribacter versatilis (strain Ellin345).